We begin with the raw amino-acid sequence, 234 residues long: Large ribosomal subunit protein uL1 (234 aa).

This sequence belongs to the universal ribosomal protein uL1 family. In terms of assembly, part of the 50S ribosomal subunit.

Functionally, binds directly to 23S rRNA. The L1 stalk is quite mobile in the ribosome, and is involved in E site tRNA release. Protein L1 is also a translational repressor protein, it controls the translation of the L11 operon by binding to its mRNA. This Serratia proteamaculans (strain 568) protein is Large ribosomal subunit protein uL1.